The sequence spans 329 residues: MNIAVLGAGAWGTALAICLSARHRVTLWTRNVEHLAELAALRTNQRYLPRQPLPDSIHLVSALSEALERAELVFVVVPVAGLRTTLQQMVALNPSLPLILACKGFETGSAKLPCQVVEEVYPASITCGVLSGPSFAREVAQGLPAALTLASHDEIFARSVAGEIRTASLRVYSGNDVIGVEVGGALKNVIAIAAGISDGIAFGNNARAALITRGLAEITRLGMALGGCRETFTGLTGIGDLILTCTGNLSRNRRVGMMLAAGRQLAEILPEIGHVTEGVYTVREAYGLGQRLQIDMPVTQAVYSILYEQVPVEIAIQDMLDREPGAETD.

Residues Trp11, Arg30, and Lys103 each coordinate NADPH. The sn-glycerol 3-phosphate site is built by Lys103, Gly132, and Ser134. NADPH is bound at residue Ala136. The sn-glycerol 3-phosphate site is built by Lys187, Asp240, Ser250, Arg251, and Asn252. The active-site Proton acceptor is the Lys187. Arg251 lines the NADPH pocket. Positions 275 and 277 each coordinate NADPH.

It belongs to the NAD-dependent glycerol-3-phosphate dehydrogenase family.

It is found in the cytoplasm. The catalysed reaction is sn-glycerol 3-phosphate + NAD(+) = dihydroxyacetone phosphate + NADH + H(+). It catalyses the reaction sn-glycerol 3-phosphate + NADP(+) = dihydroxyacetone phosphate + NADPH + H(+). Its pathway is membrane lipid metabolism; glycerophospholipid metabolism. Functionally, catalyzes the reduction of the glycolytic intermediate dihydroxyacetone phosphate (DHAP) to sn-glycerol 3-phosphate (G3P), the key precursor for phospholipid synthesis. The protein is Glycerol-3-phosphate dehydrogenase [NAD(P)+] of Nitrosomonas europaea (strain ATCC 19718 / CIP 103999 / KCTC 2705 / NBRC 14298).